The sequence spans 539 residues: Tripartite motif-containing protein 26 (539 aa).

The RING-type zinc finger occupies 16–57 (CSICLDYLRDPVTIDCGHVFCRSCTTDVRPISGSRPVCPLCK). The B box-type zinc-finger motif lies at 97-138 (QDAKLCERHREKLHYYCEDDGKLLCVMCRESREHRPHTAVLM). Cysteine 102, histidine 105, cysteine 124, and histidine 130 together coordinate Zn(2+). A coiled-coil region spans residues 188-227 (IVAEFEQGHQFLREREEHLLEQLAKLEQELTEGREKFKSR). The B30.2/SPRY domain maps to 295–539 (RGLREFQGKL…WPGTRLLLRP (245 aa)). Residues 376–437 (REGWSEDEEE…EEEEEVLESC (62 aa)) are disordered. Residues 380–434 (SEDEEEGDEEEEGEEEEEEEEAGYGDGYDDWETDEDEESLGDEEEEEEEEEEEVL) are compositionally biased toward acidic residues.

It belongs to the TRIM/RBCC family. Interacts with TBK1; this interaction bridges together TBK1 and NEMO in order to activate TBK1. Interacts with INCA1. Post-translationally, autoubiquitinates upon viral infection. In turn, autoubiquitinated TRIM26 recruits NEMO and bridges TBK1-NEMO interaction.

It localises to the cytoplasm. Its subcellular location is the nucleus. The enzyme catalyses S-ubiquitinyl-[E2 ubiquitin-conjugating enzyme]-L-cysteine + [acceptor protein]-L-lysine = [E2 ubiquitin-conjugating enzyme]-L-cysteine + N(6)-ubiquitinyl-[acceptor protein]-L-lysine.. Functionally, E3 ubiquitin-protein ligase which regulates the IFN-beta production and antiviral response downstream of various DNA-encoded pattern-recognition receptors (PRRs). Also plays a central role in determining the response to different forms of oxidative stress by controlling levels of DNA glycosylases NEIL1, NEIL3 and NTH1 that are involved in repair of damaged DNA. Promotes nuclear IRF3 ubiquitination and proteasomal degradation. Bridges together TBK1 and NEMO during the innate response to viral infection leading to the activation of TBK1. Positively regulates LPS-mediated inflammatory innate immune response by catalyzing the 'Lys-11'-linked polyubiquitination of TAB1 to enhance its activation and subsequent NF-kappa-B and MAPK signaling. In a manner independent of its catalytic activity, inhibits WWP2, a SOX2-directed E3 ubiquitin ligase, and thus protects SOX2 from polyubiquitination and proteasomal degradation. Ubiquitinates the histone acetyltransferase protein complex component PHF20 and thereby triggers its degradation in the nucleus after its recruitment by the histone demethylase KDM6B, serving as a scaffold protein. Upon induction by TGF-beta, ubiquitinates the TFIID component TAF7 for proteasomal degradation. Induces ferroptosis by ubiquitinating SLC7A11, a critical protein for lipid reactive oxygen species (ROS) scavenging. This is Tripartite motif-containing protein 26 (TRIM26) from Pan troglodytes (Chimpanzee).